Reading from the N-terminus, the 350-residue chain is DNA polymerase delta subunit 3 (350 aa).

Residues 131-350 (EEKSKPLVRP…LESFFKRKAK (220 aa)) form a disordered region. Basic and acidic residues-rich tracts occupy residues 146–162 (TTPE…KDMG) and 172–195 (MKKD…EENL). Threonine 223 bears the Phosphothreonine mark. Serine 230 carries the post-translational modification Phosphoserine. Residues 234-248 (SPKETDSNDKDKNND) are compositionally biased toward basic and acidic residues. Positions 249-262 (DLEDLLETTAEDSL) are enriched in acidic residues. The span at 274-286 (SETEHSKEPKSEE) shows a compositional bias: basic and acidic residues. Over residues 320 to 332 (LSSSKKQETPSSN) the composition is skewed to polar residues.

As to quaternary structure, DNA polymerase delta is a heterotrimer of POL3, POL32 and HYS2. POL32 can form homodimers.

It localises to the nucleus. In terms of biological role, DNA polymerase delta (DNA polymerase III) participates in chromosomal DNA replication. It is required during synthesis of the leading and lagging DNA strands at the replication fork and binds at/or near replication origins and moves along DNA with the replication fork. It has 3'-5' proofreading exonuclease activity that correct errors arising during DNA replication. It is also involved in DNA synthesis during DNA repair. This chain is DNA polymerase delta subunit 3 (POL32), found in Saccharomyces cerevisiae (strain ATCC 204508 / S288c) (Baker's yeast).